The primary structure comprises 154 residues: Urease accessory protein UreE (154 aa).

It belongs to the UreE family.

Its subcellular location is the cytoplasm. In terms of biological role, involved in urease metallocenter assembly. Binds nickel. Probably functions as a nickel donor during metallocenter assembly. This chain is Urease accessory protein UreE, found in Prochlorococcus marinus subsp. pastoris (strain CCMP1986 / NIES-2087 / MED4).